The chain runs to 254 residues: MNLFVETLGQGPDVVMLHGWGLHGGVFARVAEQLATRFCVHLVDLPGHGASPALPRFDADAVADLLAAHFPLPAQVVGWSLGGLIAQHWAARHPDKVKSLALVATSPRFVRDETWPHAQARASIEAVAQSLDGAFEQTLERFLALQMMGAPSARDTLKALRGELFSHGRPQGLLPALGLLLEADARALAGRIQCPAALFYGARDAITPIGAGRWLAESLPDAVLYEFPQASHAPFLSHEQDFVRALAEHLETQA.

Positions 14 to 238 (VVMLHGWGLH…QASHAPFLSH (225 aa)) constitute an AB hydrolase-1 domain. Residues Trp-20, 80–81 (SL), and 142–146 (FLALQ) each bind substrate. Residue Ser-80 is the Nucleophile of the active site. Residues Asp-204 and His-232 contribute to the active site. His-232 is a substrate binding site.

This sequence belongs to the AB hydrolase superfamily. Carboxylesterase BioH family. In terms of assembly, monomer.

It localises to the cytoplasm. It carries out the reaction 6-carboxyhexanoyl-[ACP] methyl ester + H2O = 6-carboxyhexanoyl-[ACP] + methanol + H(+). The protein operates within cofactor biosynthesis; biotin biosynthesis. The physiological role of BioH is to remove the methyl group introduced by BioC when the pimeloyl moiety is complete. It allows to synthesize pimeloyl-ACP via the fatty acid synthetic pathway through the hydrolysis of the ester bonds of pimeloyl-ACP esters. The polypeptide is Pimeloyl-[acyl-carrier protein] methyl ester esterase (Chromobacterium violaceum (strain ATCC 12472 / DSM 30191 / JCM 1249 / CCUG 213 / NBRC 12614 / NCIMB 9131 / NCTC 9757 / MK)).